The following is a 541-amino-acid chain: Light-independent protochlorophyllide reductase subunit B (541 aa).

[4Fe-4S] cluster is bound at residue D36. D286 serves as the catalytic Proton donor. A substrate-binding site is contributed by 421-422 (GM).

The protein belongs to the ChlB/BchB/BchZ family. Protochlorophyllide reductase is composed of three subunits; BchL, BchN and BchB. Forms a heterotetramer of two BchB and two BchN subunits. [4Fe-4S] cluster serves as cofactor.

It carries out the reaction chlorophyllide a + oxidized 2[4Fe-4S]-[ferredoxin] + 2 ADP + 2 phosphate = protochlorophyllide a + reduced 2[4Fe-4S]-[ferredoxin] + 2 ATP + 2 H2O. The protein operates within porphyrin-containing compound metabolism; bacteriochlorophyll biosynthesis (light-independent). Functionally, component of the dark-operative protochlorophyllide reductase (DPOR) that uses Mg-ATP and reduced ferredoxin to reduce ring D of protochlorophyllide (Pchlide) to form chlorophyllide a (Chlide). This reaction is light-independent. The NB-protein (BchN-BchB) is the catalytic component of the complex. The chain is Light-independent protochlorophyllide reductase subunit B from Chloroflexus aurantiacus (strain ATCC 29364 / DSM 637 / Y-400-fl).